Here is a 1479-residue protein sequence, read N- to C-terminus: MEANEESLKGKIEKLEGKEVIVESKEDEMDIIIEENREAEQEVMEVKARDGRGEQNDVLMEENNNQGEQKDEEMQDASSRSESSDFNSDEDEQILSRRDDELDLEKPLSEEEIDELISDLLAVESKAAEAQEALEKESLSKVESEVREELAQALRGDELDEAVAAEMMTFKDEWEATLDELETESATLLEQLDGAGIELPKLYEMIESQAPNGCYTEAWKQRAHWVGTQVTKETVESLANAERFLHTHRPVRKRHGKLLEEGASGFLEKKLADGAVKESLAGTSELDWSSLNKVFSEKRDESVSFGSKQWASVYLASTPHQAAAMGLEFPGVNEVEEIEEIDASLADPFLADAIDNERELALTEEQKTNYIRVKEEDDITCDRVLQLRLKRKRRKKRSKQVIRCAAENMDDDSVYLDGNNTTPNFAKDQVKSPETSTQVHNSEVNIEENGNFSNSDVDKMTPSTHINVDAKRDDSQNPANNFRCTACNKVAVEVHSHPLLEVIVCMDCKRSIEDRVSKVDDSLERHCEWCGHIADLIDCRTCEKLFCASCIKRNIGEEYMSEAQSSGWDCCCCSPIPLQRLTLELEKAMRDKKSIELSSDSSSDSSSDNNSVDTDADVNVTISSKKKSKKKIRRIIDDAELGKDTRTKIAIEKARQERLRSLQFSARYKTISSMGDVKSIPEGAEVEVLGDAHSGYIVNVVREIGEEAVRVPRSISAKLKVHQVTGIRFMWENIIQSISRVKSGDKGLGCILAHTMGLGKTFQVIAFLYTAMRCVDLGLKTALIVTPVNVLHNWRSEFEKWMPSEVKPLRIFMLGDVSRERRFDLLTKWRKKGGVFLMGYTNFRNLSLGRGVKDLNAARGICNALRDGPDILVCDEAHIIKNTKADTTQALKQVKCQRRIALTGSPLQNNLMEYYCMVDFVREGFLGSSPEFRNRFQNPIENGQHMNSTAEDVKIMNQRSHILYEQLKGFVQRMDMNVVKKDLPPKTVFVISVKLSPLQRILYQRFLELYGFSDGRTDERMRKNFFAAYQVLAQILNHPGIPQLRSEDSKNGRRGSIVDIPDDCSSDENIDYNMVTGEKQRTMNDLQDKVDGYLQKDWWVDLLQKNNYKVSDFSGKMILLLDILSMSADVGDKALVFSQSIPTLDLIELYLSRVPRHGKQGKFWKKGKDWYRIDGKTESSERQKLVDRFNEPDNKRVKCTLISTRAGSLGINLYAANRVIIVDGSWNPTYDLQAIFRAWRYGQKKPVFAYRLMARGTIEEKIYKRQVTKEGLAARVVDRQQVHRTISKEEMLHLFEFDDDDEKSEAVTEISKQNEAGHSNLVEQAILWTKKATLSRVGGDKLMENLLQRHGPNWISSFHEHETLLQENEEERLTKEEKDMAWEVYRRALEWEEVQRVPFSESPVVPKPSPSTQTEPLPQPKGFNRSRFVNRNCTRIAHQLTLISQGLKVGSSTVCGECGRVIRWEDVIPASKLSAVIVN.

Residues Glu-19–Arg-49 adopt a coiled-coil conformation. The segment covering Glu-40–Gln-55 has biased composition (basic and acidic residues). Positions Glu-40–Ser-109 are disordered. The segment covering Asp-76–Phe-86 has biased composition (low complexity). The span at Ile-94–Ser-109 shows a compositional bias: basic and acidic residues. Residues Ser-109 to Leu-199 adopt a coiled-coil conformation. One can recognise an ADD domain in the interval Arg-472–Ser-601. The GATA-type; atypical zinc finger occupies Arg-483 to Asp-514. The PHD-type; atypical zinc-finger motif lies at Glu-524–Pro-577. Residues Leu-578–Ser-598 are a coiled coil. The segment at Ser-594–Asp-615 is disordered. The span at Ser-598 to Asp-615 shows a compositional bias: low complexity. Residues Val-741 to Gly-924 form the Helicase ATP-binding domain. His-754–Thr-761 is a binding site for ATP. The short motif at Asp-875 to His-878 is the DEAH box element. Positions Asp-1122 to Glu-1290 constitute a Helicase C-terminal domain. The segment at Ser-1400 to Phe-1423 is disordered.

Belongs to the SNF2/RAD54 helicase family.

The protein localises to the nucleus. Its subcellular location is the chromosome. The protein resides in the telomere. Functionally, involved in transcriptional regulation and chromatin remodeling. Facilitates DNA replication in multiple cellular environments and is required for efficient replication of a subset of genomic loci. Binds to DNA tandem repeat sequences in both telomeres and euchromatin and in vitro binds DNA quadruplex structures. May help stabilizing G-rich regions into regular chromatin structures by remodeling G4 DNA and incorporating H3.3-containing nucleosomes. Involved in DNA repair of gamma-irradiation-mediated damages. The polypeptide is Protein CHROMATIN REMODELING 20 (Arabidopsis thaliana (Mouse-ear cress)).